The sequence spans 321 residues: o-succinylbenzoate synthase (321 aa).

Lys134 functions as the Proton donor in the catalytic mechanism. Residues Asp162, Glu191, and Asp214 each contribute to the Mg(2+) site. Lys236 serves as the catalytic Proton acceptor.

The protein belongs to the mandelate racemase/muconate lactonizing enzyme family. MenC type 1 subfamily. A divalent metal cation serves as cofactor.

The catalysed reaction is (1R,6R)-6-hydroxy-2-succinyl-cyclohexa-2,4-diene-1-carboxylate = 2-succinylbenzoate + H2O. The protein operates within quinol/quinone metabolism; 1,4-dihydroxy-2-naphthoate biosynthesis; 1,4-dihydroxy-2-naphthoate from chorismate: step 4/7. It functions in the pathway quinol/quinone metabolism; menaquinone biosynthesis. Converts 2-succinyl-6-hydroxy-2,4-cyclohexadiene-1-carboxylate (SHCHC) to 2-succinylbenzoate (OSB). The protein is o-succinylbenzoate synthase of Enterobacter sp. (strain 638).